A 122-amino-acid polypeptide reads, in one-letter code: UPF0102 protein Ping_1176 (122 aa).

This sequence belongs to the UPF0102 family.

This is UPF0102 protein Ping_1176 from Psychromonas ingrahamii (strain DSM 17664 / CCUG 51855 / 37).